The primary structure comprises 191 residues: ECF RNA polymerase sigma factor ShbA (191 aa).

The segment at 27–98 (LLAHVHPLAL…HKVADLQRAA (72 aa)) is sigma-70 factor domain-2. The interval 100 to 122 (RHPGSTAVPSDEMPERPDDSLGP) is disordered. Basic and acidic residues predominate over residues 112–122 (MPERPDDSLGP). Residues 138 to 187 (LLANLPENQRELLVLRVAVGLTAEETGQMLGMSPGAVRVAQHRALSRLRA) are sigma-70 factor domain-4. A DNA-binding region (H-T-H motif) is located at residues 160–179 (AEETGQMLGMSPGAVRVAQH).

It belongs to the sigma-70 factor family. ECF subfamily.

Functionally, sigma factors are initiation factors that promote the attachment of RNA polymerase to specific initiation sites and are then released. Extracytoplasmic function (ECF) sigma factors are held in an inactive form by an anti-sigma factor until released. This alternative sigma factor governs the transcription of the principal sigma factor HrdB (SigA) throughout growth. Acts by binding to the promoter region. This is ECF RNA polymerase sigma factor ShbA from Streptomyces griseus subsp. griseus (strain JCM 4626 / CBS 651.72 / NBRC 13350 / KCC S-0626 / ISP 5235).